Consider the following 260-residue polypeptide: Thiazole synthase (260 aa).

The active-site Schiff-base intermediate with DXP is the K96. 1-deoxy-D-xylulose 5-phosphate-binding positions include G157, 184 to 185 (AG), and 206 to 207 (NT).

The protein belongs to the ThiG family. In terms of assembly, homotetramer. Forms heterodimers with either ThiH or ThiS.

It localises to the cytoplasm. It catalyses the reaction [ThiS sulfur-carrier protein]-C-terminal-Gly-aminoethanethioate + 2-iminoacetate + 1-deoxy-D-xylulose 5-phosphate = [ThiS sulfur-carrier protein]-C-terminal Gly-Gly + 2-[(2R,5Z)-2-carboxy-4-methylthiazol-5(2H)-ylidene]ethyl phosphate + 2 H2O + H(+). Its pathway is cofactor biosynthesis; thiamine diphosphate biosynthesis. Catalyzes the rearrangement of 1-deoxy-D-xylulose 5-phosphate (DXP) to produce the thiazole phosphate moiety of thiamine. Sulfur is provided by the thiocarboxylate moiety of the carrier protein ThiS. In vitro, sulfur can be provided by H(2)S. The chain is Thiazole synthase from Rhodopseudomonas palustris (strain BisB18).